A 501-amino-acid chain; its full sequence is NAD(P)H-quinone oxidoreductase chain 4, chloroplastic (501 aa).

A run of 14 helical transmembrane segments spans residues 5-25 (FPWL…IFFL), 38-58 (ICIC…HFQL), 85-105 (GLSI…TLAA), 112-130 (SRLF…IGSF), 135-155 (LLLF…LLAM), 168-188 (FILY…GIGL), 209-229 (ALEI…LPII), 243-263 (HYST…YGLV), 275-295 (SIFS…AALT), 306-326 (IAYS…SITD), 331-351 (GAIL…FLAG), 387-407 (LALP…GIIT), 417-437 (ILIT…LLSM), and 463-483 (LFVS…PDFV).

This sequence belongs to the complex I subunit 4 family.

The protein resides in the plastid. It localises to the chloroplast thylakoid membrane. It carries out the reaction a plastoquinone + NADH + (n+1) H(+)(in) = a plastoquinol + NAD(+) + n H(+)(out). It catalyses the reaction a plastoquinone + NADPH + (n+1) H(+)(in) = a plastoquinol + NADP(+) + n H(+)(out). The sequence is that of NAD(P)H-quinone oxidoreductase chain 4, chloroplastic from Eucalyptus globulus subsp. globulus (Tasmanian blue gum).